Consider the following 300-residue polypeptide: Acetylglutamate kinase (300 aa).

Substrate-binding positions include 68–69, R90, and N194; that span reads GG.

The protein belongs to the acetylglutamate kinase family. ArgB subfamily.

Its subcellular location is the cytoplasm. It carries out the reaction N-acetyl-L-glutamate + ATP = N-acetyl-L-glutamyl 5-phosphate + ADP. Its pathway is amino-acid biosynthesis; L-arginine biosynthesis; N(2)-acetyl-L-ornithine from L-glutamate: step 2/4. In terms of biological role, catalyzes the ATP-dependent phosphorylation of N-acetyl-L-glutamate. The polypeptide is Acetylglutamate kinase (Methanocaldococcus jannaschii (strain ATCC 43067 / DSM 2661 / JAL-1 / JCM 10045 / NBRC 100440) (Methanococcus jannaschii)).